Consider the following 581-residue polypeptide: Alpha-amylase 2 (581 aa).

A signal peptide spans 1 to 24 (MNYRRNICLRIGWMLLFAFIPAYA). The cysteines at positions 56 and 64 are disulfide-linked. Trp-109 contributes to the substrate binding site. Asn-147 lines the Ca(2+) pocket. A disulfide bridge links Cys-176 with Cys-191. Ca(2+) is bound at residue Asp-202. Substrate is bound at residue Arg-231. Residues Asp-233, His-237, and Glu-257 each contribute to the Ca(2+) site. The Nucleophile role is filled by Asp-233. 236–237 (KH) contacts substrate. The active-site Proton donor is Glu-257. Gly-261 is a binding site for substrate. Cys-267 and Cys-311 form a disulfide bridge. Asn-291 is a glycosylation site (N-linked (GlcNAc...) asparagine). Asp-325 contributes to the substrate binding site. The N-linked (GlcNAc...) asparagine glycan is linked to Asn-332. Position 372 (Arg-372) interacts with substrate. The GPI-anchor amidated serine moiety is linked to residue Ser-551. The propeptide at 552–581 (EAKTIRSFTKLKLFILLIAVPFALPMIILI) is removed in mature form.

This sequence belongs to the glycosyl hydrolase 13 family. Ca(2+) serves as cofactor.

The protein resides in the cell membrane. It catalyses the reaction Endohydrolysis of (1-&gt;4)-alpha-D-glucosidic linkages in polysaccharides containing three or more (1-&gt;4)-alpha-linked D-glucose units.. The chain is Alpha-amylase 2 (aah2) from Schizosaccharomyces pombe (strain 972 / ATCC 24843) (Fission yeast).